Consider the following 694-residue polypeptide: MARDLIFEIGTEEIPARFMNPALEQMAAVASQLLQEYRLPCQKVATYGTPRRLALYLTALAENQEELVQEIKGPPVKAAFTADGQPTKAALGFARSMGVAVEELVTREYNGGQYVFAIKREQGRPAVTVLPELLLAVVNALSFPKPMRWGSLEIRFARPIRWLLALFGSEVIPVELAGLTASNQTYGHRFLAPGPHQVPTASAYFQVLEENYVLVDQHRRRQLIWEQITGLASREGGRVEKDPELLEEITYLVEYPTALAGHFDPEYLKLPQEVVITPMRDHQRYFPVWNAQGELLPRFITVHNGTADHLENISRGNERVLAARLADAAFFYQEDRQTPLAAKVPKLEEIVFQESLGTMLAKTRRLQRLAVNLVNTLDLPAELVPLVERTAELAKADLVTAMVYEFPELQGIMGSYYAAHDGERAEVCQGIRQHYWPRFAGDRLPDSLTGMVVGLADRLDTLVGCFGAGLIPTGSQDPYALRRQATGVVTIAVEFNLKFSLTASIAAAYEGYTAGGIQLARPLDVVQEQLVQFCRQRLEHLLEEKGYRYDVIQACLAAGSDDLAAAYHRTRDLSAFREEEGFAALQTAFTRAFNLARQAREKYHLRPEALQEKAEAELYRALMETRHQAEPRLRAGDYLAALKAMAALRGPIDAFFDNVLVMAPDMEVRNNRLALLQAIVNLVFQIADFSRLVP.

The protein belongs to the class-II aminoacyl-tRNA synthetase family. As to quaternary structure, tetramer of two alpha and two beta subunits.

It is found in the cytoplasm. The enzyme catalyses tRNA(Gly) + glycine + ATP = glycyl-tRNA(Gly) + AMP + diphosphate. In Moorella thermoacetica (strain ATCC 39073 / JCM 9320), this protein is Glycine--tRNA ligase beta subunit.